Consider the following 321-residue polypeptide: Ribosomal RNA small subunit methyltransferase H (321 aa).

S-adenosyl-L-methionine-binding positions include 42–44, Asp-62, Phe-86, Asp-107, and Gln-114; that span reads GGH.

The protein belongs to the methyltransferase superfamily. RsmH family.

The protein resides in the cytoplasm. The catalysed reaction is cytidine(1402) in 16S rRNA + S-adenosyl-L-methionine = N(4)-methylcytidine(1402) in 16S rRNA + S-adenosyl-L-homocysteine + H(+). Functionally, specifically methylates the N4 position of cytidine in position 1402 (C1402) of 16S rRNA. This is Ribosomal RNA small subunit methyltransferase H from Herminiimonas arsenicoxydans.